The primary structure comprises 513 residues: Ferulic acid decarboxylase 1 (513 aa).

Mn(2+) is bound by residues asparagine 174, histidine 197, and glutamate 240. Prenylated FMN is bound by residues 174–179 (NWSIAR), 196–197 (QH), and glutamate 240. Glutamate 289 acts as the Proton donor in catalysis. Prenylated FMN is bound at residue lysine 405.

It belongs to the UbiD family. UbiD-like/FDC subfamily. In terms of assembly, homodimer. May form higher order oligomers. Mn(2+) is required as a cofactor. Prenylated FMN serves as cofactor.

It localises to the cytoplasm. It catalyses the reaction (E)-4-coumarate + H(+) = 4-vinylphenol + CO2. The enzyme catalyses (E)-cinnamate + H(+) = styrene + CO2. The catalysed reaction is (E)-ferulate + H(+) = 2-methoxy-4-vinylphenol + CO2. Functionally, catalyzes the reversible decarboxylation of aromatic carboxylic acids like ferulic acid, p-coumaric acid or cinnamic acid, producing the corresponding vinyl derivatives 4-vinylphenol, 4-vinylguaiacol, and styrene, respectively, which play the role of aroma metabolites. The protein is Ferulic acid decarboxylase 1 of Candida dubliniensis (strain CD36 / ATCC MYA-646 / CBS 7987 / NCPF 3949 / NRRL Y-17841) (Yeast).